A 304-amino-acid polypeptide reads, in one-letter code: Mycothiol acetyltransferase (304 aa).

Residue glutamate 36 coordinates 1D-myo-inositol 2-(L-cysteinylamino)-2-deoxy-alpha-D-glucopyranoside. 73–75 (LFV) serves as a coordination point for acetyl-CoA. Residues 145–304 (LEIQTYTESV…EEHCVWAKSD (160 aa)) form the N-acetyltransferase domain. Residues glutamate 179, lysine 225, and glutamate 236 each coordinate 1D-myo-inositol 2-(L-cysteinylamino)-2-deoxy-alpha-D-glucopyranoside. Acetyl-CoA is bound at residue 240–242 (VGL). A 1D-myo-inositol 2-(L-cysteinylamino)-2-deoxy-alpha-D-glucopyranoside-binding site is contributed by tyrosine 274. 279–284 (NDPAVK) provides a ligand contact to acetyl-CoA.

Belongs to the acetyltransferase family. MshD subfamily. As to quaternary structure, monomer.

The catalysed reaction is 1D-myo-inositol 2-(L-cysteinylamino)-2-deoxy-alpha-D-glucopyranoside + acetyl-CoA = mycothiol + CoA + H(+). Functionally, catalyzes the transfer of acetyl from acetyl-CoA to desacetylmycothiol (Cys-GlcN-Ins) to form mycothiol. The chain is Mycothiol acetyltransferase from Corynebacterium aurimucosum (strain ATCC 700975 / DSM 44827 / CIP 107346 / CN-1) (Corynebacterium nigricans).